We begin with the raw amino-acid sequence, 192 residues long: Leucine-rich repeat-containing protein 51 (192 aa).

LRR repeat units lie at residues 49-71, 80-101, and 103-124; these read SLTQ…NQVV, NLAW…LTTF, and NLSV…NKLA. Residues 137–175 enclose the LRRCT domain; it reads NPIEEEKGYRQYVLCNLPRITTFDFSGVTKADRSTAEVW.

The protein localises to the cytoplasm. The polypeptide is Leucine-rich repeat-containing protein 51 (Rattus norvegicus (Rat)).